The following is a 476-amino-acid chain: Undecaprenyl-phosphate galactose phosphotransferase (476 aa).

The next 5 membrane-spanning stretches (helical) occupy residues 15–35, 52–72, 93–113, 115–135, and 283–303; these read IFLAISDLIFFNLALWFSLGC, LDTRVITHFILSVVCVGWFWI, TIVIFAIFDLALIAFTKWQFS, YVWVFCWTFALILVPFFRALT, and FDIVCSIMILIIASPLMIYLW. The Cytoplasmic portion of the chain corresponds to 304–476; it reads YKVTRDGGPA…KVVLRRDGAY (173 aa).

This sequence belongs to the bacterial sugar transferase family.

The protein localises to the cell inner membrane. It carries out the reaction di-trans,octa-cis-undecaprenyl phosphate + UDP-alpha-D-galactose = alpha-D-galactosyl-di-trans,octa-cis-undecaprenyl diphosphate + UMP. It functions in the pathway bacterial outer membrane biogenesis; LPS O-antigen biosynthesis. Is responsible for transferring galactose-1-phosphate to the lipid precursor undecaprenol phosphate in the first steps of O-polysaccharide biosynthesis. This chain is Undecaprenyl-phosphate galactose phosphotransferase (rfbP), found in Salmonella typhimurium (strain LT2 / SGSC1412 / ATCC 700720).